The following is a 398-amino-acid chain: MVDTEMQEQDVTFGALVETKYLEEEPLEPENDHNPSEIPQPLLLGDGQANNGHGMNGGAVGVVDHSERKTRRVQMLSPKTEGENAKKRKTWLLDSEAQGTDEAGTPVEQVAFLREVEAFYKESFLEFKPPKFYGQPLNILKLWRAVVNLGGYEVVTTNKLWRQVGESFNPPKTCTTVSYTFRNFYEKALLEYEKCLRNNGELNLPGSTLILSSSVEKEPSSHQGSGSGRARRDSAARAMQGWHAQRLVGSGEVTAPAVKDKGLISTPKHKKLKSIGLQKHKQQTSMDHVVTNEADKQLAAEVVDVGPVADWVKINVKESKDSFEIFALVPGLLRKEVRIQSDPAGKVVITGQPEQLDNPWGITPFKKIVDLSARIDPLHTSAVMSMHGRLFIRVPFEQ.

Positions 25-87 are disordered; the sequence is EPLEPENDHN…PKTEGENAKK (63 aa). Residues 106-197 form the ARID domain; it reads PVEQVAFLRE…ALLEYEKCLR (92 aa). A disordered region spans residues 213–236; sequence SSVEKEPSSHQGSGSGRARRDSAA. Residues 305–398 form the sHSP domain; it reads VGPVADWVKI…RLFIRVPFEQ (94 aa).

It belongs to the small heat shock protein (HSP20) family.

The protein localises to the nucleus. This chain is AT-rich interactive domain-containing protein 6 (ARID6), found in Arabidopsis thaliana (Mouse-ear cress).